The chain runs to 236 residues: Phosphoribosylaminoimidazole-succinocarboxamide synthase (236 aa).

It belongs to the SAICAR synthetase family.

The catalysed reaction is 5-amino-1-(5-phospho-D-ribosyl)imidazole-4-carboxylate + L-aspartate + ATP = (2S)-2-[5-amino-1-(5-phospho-beta-D-ribosyl)imidazole-4-carboxamido]succinate + ADP + phosphate + 2 H(+). The protein operates within purine metabolism; IMP biosynthesis via de novo pathway; 5-amino-1-(5-phospho-D-ribosyl)imidazole-4-carboxamide from 5-amino-1-(5-phospho-D-ribosyl)imidazole-4-carboxylate: step 1/2. This is Phosphoribosylaminoimidazole-succinocarboxamide synthase from Campylobacter jejuni (strain RM1221).